The following is a 546-amino-acid chain: Probable protein kinase UbiB (546 aa).

The region spanning 124–502 is the Protein kinase domain; sequence DFDIKPLASA…QARQGQSRYL (379 aa). ATP-binding positions include 130 to 138 and Lys153; that span reads LASASIAQV. Residue Asp288 is the Proton acceptor of the active site. 2 helical membrane passes run 499–519 and 521–541; these read SRYL…LLIS and VEAD…WIIG.

The protein belongs to the ABC1 family. UbiB subfamily.

The protein localises to the cell inner membrane. It functions in the pathway cofactor biosynthesis; ubiquinone biosynthesis [regulation]. Its function is as follows. Is probably a protein kinase regulator of UbiI activity which is involved in aerobic coenzyme Q (ubiquinone) biosynthesis. The protein is Probable protein kinase UbiB of Pectobacterium carotovorum subsp. carotovorum (strain PC1).